Here is a 401-residue protein sequence, read N- to C-terminus: Argininosuccinate synthase (401 aa).

ATP contacts are provided by residues 10 to 18 and Ala-38; that span reads AYSGGVDTS. Tyr-89 contributes to the L-citrulline binding site. An ATP-binding site is contributed by Gly-119. The L-aspartate site is built by Thr-121, Asn-125, and Asp-126. An L-citrulline-binding site is contributed by Asn-125. L-citrulline is bound by residues Arg-129, Ser-177, Ser-186, Glu-262, and Tyr-274.

It belongs to the argininosuccinate synthase family. Type 1 subfamily. In terms of assembly, homotetramer.

The protein resides in the cytoplasm. The enzyme catalyses L-citrulline + L-aspartate + ATP = 2-(N(omega)-L-arginino)succinate + AMP + diphosphate + H(+). It functions in the pathway amino-acid biosynthesis; L-arginine biosynthesis; L-arginine from L-ornithine and carbamoyl phosphate: step 2/3. The polypeptide is Argininosuccinate synthase (Synechococcus sp. (strain WH7803)).